The following is a 342-amino-acid chain: MADDLEQQPQGWLSSWLPTWRPTSMSQLKNVEARILQCLQNKFLARYVSLPNQNKIWTVTVSPELRDRTPLVMVHGFGGGVGLWILNMDSLSTRRTLHTFDLLGFGRSSRPTFPRDPEGAEDEFVTSIETWRESMGIPSMILLGHSLGGFLATSYSIKYPDRVKHLILVDPWGFPLRPADPSQVRAPPTWVKAVASVLGRSNPLAVLRVAGPWGPGLVQRFRPDFKRKFADFFDDDTISEYIYHCNAQNPSGETAFKAMMESFGWARRPMLERIHLIRKDVPITMIYGANTWIDTSTGKKVKLQRPDSYVRDLEIEGASHHVYADQPHIFNAVVEEICDSVD.

The 255-residue stretch at 70 to 324 folds into the AB hydrolase-1 domain; the sequence is PLVMVHGFGG…IEGASHHVYA (255 aa).

The protein belongs to the peptidase S33 family. ABHD4/ABHD5 subfamily.

It carries out the reaction N-hexadecanoyl-1,2-di-(9Z-octadecenoyl)-sn-glycero-3-phosphoethanolamine + H2O = N-hexadecanoyl-1-(9Z-octadecenoyl)-sn-glycero-3-phosphoethanolamine + (9Z)-octadecenoate + H(+). The catalysed reaction is an N-acyl-1,2-diacyl-sn-glycero-3-phosphoethanolamine + H2O = N,1-diacyl-sn-glycero-3-phosphoethanolamine + a fatty acid + H(+). The enzyme catalyses N-hexadecanoyl-1-(9Z-octadecenoyl)-sn-glycero-3-phosphoethanolamine + H2O = N-hexadecanoyl-sn-glycero-3-phosphoethanolamine + (9Z)-octadecenoate + H(+). It catalyses the reaction N-octadecanoyl-1-(9Z-octadecenoyl)-sn-glycero-3-phosphoethanolamine + H2O = N-octadecanoyl-sn-glycero-3-phospho-ethanolamine + (9Z)-octadecenoate + H(+). It carries out the reaction N-eicosanoyl-1-(9Z-octadecenoyl)-sn-glycero-3-phosphoethanolamine + H2O = N-eicosanoyl-sn-glycero-3-phosphoethanolamine + (9Z)-octadecenoate + H(+). The catalysed reaction is N,1-di-(9Z-octadecenoyl)-sn-glycero-3-phosphoethanolamine + H2O = N-(9Z-octadecenoyl)-sn-glycero-3-phosphoethanolamine + (9Z)-octadecenoate + H(+). The enzyme catalyses N-(5Z,8Z,11Z,14Z-eicosatetraenoyl)-1-(9Z-octadecenoyl)-sn-glycero-3-phosphoethanolamine + H2O = N-(5Z,8Z,11Z,14Z-eicosatetraenoyl)-sn-glycero-3-phosphoethanolamine + (9Z)-octadecenoate + H(+). It catalyses the reaction 1-octadecanoyl-2-(9Z-octadecenoyl)-sn-glycero-3-phospho-(N-hexadecanoyl)-serine + H2O = 1-octadecanoyl-2-hydroxy-sn-glycero-3-phospho-(N-hexadecanoyl)-serine + (9Z)-octadecenoate + H(+). It carries out the reaction 1-O-(1Z-octadecenoyl)-2-(9Z-octadecenoyl)-sn-glycero-3-phospho-N-hexadecanoyl-ethanolamine + H2O = 1-O-(1Z-octadecenyl)-sn-glycero-3-phospho-N-hexadecanoyl-ethanolamine + (9Z)-octadecenoate + H(+). The catalysed reaction is N,1-diacyl-sn-glycero-3-phosphoethanolamine + H2O = N-acyl-sn-glycero-3-phosphoethanolamine + a fatty acid + H(+). Lysophospholipase selective for N-acyl phosphatidylethanolamine (NAPE). Contributes to the biosynthesis of N-acyl ethanolamines, including the endocannabinoid anandamide by hydrolyzing the sn-1 and sn-2 acyl chains from N-acyl phosphatidylethanolamine (NAPE) generating glycerophospho-N-acyl ethanolamine (GP-NAE), an intermediate for N-acyl ethanolamine biosynthesis. Hydrolyzes substrates bearing saturated, monounsaturated, polyunsaturated N-acyl chains. Shows no significant activity towards other lysophospholipids, including lysophosphatidylcholine, lysophosphatidylethanolamine and lysophosphatidylserine. The chain is (Lyso)-N-acylphosphatidylethanolamine lipase from Bos taurus (Bovine).